A 525-amino-acid chain; its full sequence is GMP synthase [glutamine-hydrolyzing] (525 aa).

The 199-residue stretch at R9 to Q207 folds into the Glutamine amidotransferase type-1 domain. Residue C86 is the Nucleophile of the active site. Active-site residues include H181 and E183. The region spanning W208–R400 is the GMPS ATP-PPase domain. S235–S241 is an ATP binding site.

As to quaternary structure, homodimer.

The enzyme catalyses XMP + L-glutamine + ATP + H2O = GMP + L-glutamate + AMP + diphosphate + 2 H(+). It functions in the pathway purine metabolism; GMP biosynthesis; GMP from XMP (L-Gln route): step 1/1. In terms of biological role, catalyzes the synthesis of GMP from XMP. The chain is GMP synthase [glutamine-hydrolyzing] from Idiomarina loihiensis (strain ATCC BAA-735 / DSM 15497 / L2-TR).